A 603-amino-acid chain; its full sequence is MNAAAKAGKLARAPADLGKGGVPGDAAPGAPGAAPLAKEIPEVLMDPRSRRQYVRGRFLGKGGFAKCFEISDSDTKEVFPGKIVPKSLLLKPHQKEKMSMEISIHRSLAHQHVVGFHGFFEDSDFVFVVLELCRRRSLLELHKRRKALTEPEARYYLRQIVLGCQYLHRNQVIHRDLKLGNLFLNEDLEVKIGDFGLATKVEYEGERKKTLCGTPNYIAPEVLSKKGHSFEVDVWSIGCIMYTLLVGKPPFETSCLKETYLRIKKNEYSIPKHINPVAASLIQKMLQTDPTARPTIHELLNDEFFTSGYIPARLPITCLTIPPRFSIAPSSLDPSNRKPLTVLNKGVENPLPDRPREKEEPVVRETNEAIECHLSDLLQQLTSVNASKPSERGLVRQEEAEDPACIPIFWVSKWVDYSDKYGLGYQLCDNSVGVLFNDSTRLILYNDGDSLQYIERDGTESYLTVSSHPNSLMKKITLLNYFRNYMSEHLLKAGANITPREGDELARLPYLRTWFRTRSAIILHLSNGTVQINFFQDHTKLILCPLMAAVTYINEKRDFRTYRLSLLEEYGCCKELASRLRYARTMVDKLLSSRSACNRLKAS.

A compositionally biased stretch (low complexity) spans 1 to 15 (MNAAAKAGKLARAPA). Residues 1–32 (MNAAAKAGKLARAPADLGKGGVPGDAAPGAPG) are disordered. Residue lysine 19 forms a Glycyl lysine isopeptide (Lys-Gly) (interchain with G-Cter in ubiquitin) linkage. Positions 53–305 (YVRGRFLGKG…IHELLNDEFF (253 aa)) constitute a Protein kinase domain. Residues 59–67 (LGKGGFAKC) and lysine 82 each bind ATP. Residue serine 103 is modified to Phosphoserine. An ATP-binding site is contributed by glutamate 131. Serine 137 is subject to Phosphoserine. The Proton acceptor role is filled by aspartate 176. Residues 178 to 181 (KLGN) and aspartate 194 contribute to the ATP site. Positions 194 to 221 (DFGLATKVEYEGERKKTLCGTPNYIAPE) are activation loop. Threonine 210 bears the Phosphothreonine; by AURKA mark. Residue threonine 214 is modified to Phosphothreonine. Serine 269 and serine 335 each carry phosphoserine; by autocatalysis. Residues 337–340 (RKPL) carry the D-box that targets the protein for proteasomal degradation in anaphase motif. Lysine 338 participates in a covalent cross-link: Glycyl lysine isopeptide (Lys-Gly) (interchain with G-Cter in SUMO2). The interval 338 to 361 (KPLTVLNKGVENPLPDRPREKEEP) is disordered. Over residues 351 to 361 (LPDRPREKEEP) the composition is skewed to basic and acidic residues. Phosphoserine occurs at positions 375 and 450. Residues 410–488 (WVSKWVDYSD…LNYFRNYMSE (79 aa)) form the POLO box 1 domain. Residue lysine 492 forms a Glycyl lysine isopeptide (Lys-Gly) (interchain with G-Cter in ubiquitin) linkage. The tract at residues 493–507 (AGANITPREGDELAR) is linker. Position 498 is a phosphothreonine (threonine 498). The region spanning 510-592 (YLRTWFRTRS…ARTMVDKLLS (83 aa)) is the POLO box 2 domain. The tract at residues 538-540 (HTK) is important for interaction with phosphorylated proteins.

Belongs to the protein kinase superfamily. Ser/Thr protein kinase family. CDC5/Polo subfamily. In terms of assembly, interacts with CEP170 and EVI5. Interacts and phosphorylates ERCC6L. Interacts with FAM29A. Interacts with SLX4/BTBD12 and TTDN1. Interacts with BUB1B. Interacts (via POLO-box domain) with the phosphorylated form of BUB1, CENPU and CDC25C. Interacts with isoform 3 of SGO1. Interacts with BORA, KIF2A and AURKA. Interacts with TOPORS and CYLD. Interacts with ECT2; the interaction is stimulated upon phosphorylation of ECT2 on 'Thr-444'. Interacts with PRC1. Interacts with KIF20A/MKLP2 (when phosphorylated), leading to the recruitment at the central spindle. Interacts (via POLO box domains) with PPP1R12A/MYPT1 (when previously phosphorylated by CDK1). Part of an astrin (SPAG5)-kinastrin (SKAP) complex containing KNSTRN, SPAG5, PLK1, DYNLL1 and SGO2. Interacts with BIRC6/bruce. Interacts with CDK1-phosphorylated FRY; this interaction occurs in mitotic cells, but not in interphase cells. FRY interaction facilitates AURKA-mediated PLK1 phosphorylation. Interacts with CDK1-phosphorylated DCTN6 during mitotic prometaphase; the interaction facilitates recruitment to kinetochores. Interacts with CEP68; the interaction phosphorylates CEP68. Interacts (via POLO-box domain) with DCTN1. Interacts with CEP20 in later G1, S, G2 and M phases of the cell cycle; this interaction recruits PLK1 to centrosomes, a step required for S phase progression. Interacts with HSF1; this interaction increases upon heat shock but does not modulate neither HSF1 homotrimerization nor DNA-binding activities. Interacts with HNRNPU; this interaction induces phosphorylation of HNRNPU in mitosis. Interacts (via its N-terminus) with RIOK2. Interacts with KLHL22. Interacts (via POLO box domains) with NEDD9/HEF1 (via C-terminus). Interacts (via RVxF motif) with FIRRM; regulates PLK1 kinase activity. Interacts with SKA3; the interaction promotes the stability of PLK1. Interacts with the MTMR3:MTMR4 heterooligomer; brings CEP55 and PLK1 together during early mitosis, regulating the phosphorylation of CEP55 by PLK1 and its recruitment to the midbody where it can mediate cell abscission. Post-translationally, catalytic activity is enhanced by phosphorylation of Thr-210. Phosphorylation at Thr-210 is first detected on centrosomes in the G2 phase of the cell cycle, peaks in prometaphase and gradually disappears from centrosomes during anaphase. Dephosphorylation at Thr-210 at centrosomes is probably mediated by protein phosphatase 1C (PP1C), via interaction with PPP1R12A/MYPT1. Autophosphorylation and phosphorylation of Ser-137 may not be significant for the activation of PLK1 during mitosis, but may enhance catalytic activity during recovery after DNA damage checkpoint. Phosphorylated in vitro by STK10. Ubiquitinated by the anaphase promoting complex/cyclosome (APC/C) in anaphase and following DNA damage, leading to its degradation by the proteasome. Ubiquitination is mediated via its interaction with FZR1/CDH1. Ubiquitination and subsequent degradation prevents entry into mitosis and is essential to maintain an efficient G2 DNA damage checkpoint. Monoubiquitination at Lys-492 by the BCR(KLHL22) ubiquitin ligase complex does not lead to degradation: it promotes PLK1 dissociation from phosphoreceptor proteins and subsequent removal from kinetochores, allowing silencing of the spindle assembly checkpoint (SAC) and chromosome segregation.

It localises to the nucleus. The protein localises to the chromosome. The protein resides in the centromere. It is found in the kinetochore. Its subcellular location is the cytoplasm. It localises to the cytoskeleton. The protein localises to the microtubule organizing center. The protein resides in the centrosome. It is found in the spindle. Its subcellular location is the midbody. The catalysed reaction is L-seryl-[protein] + ATP = O-phospho-L-seryl-[protein] + ADP + H(+). It carries out the reaction L-threonyl-[protein] + ATP = O-phospho-L-threonyl-[protein] + ADP + H(+). With respect to regulation, activated by phosphorylation of Thr-210 by AURKA; phosphorylation by AURKA is enhanced by BORA. Once activated, activity is stimulated by binding target proteins. Binding of target proteins has no effect on the non-activated kinase. Several inhibitors targeting PLKs are currently in development and are under investigation in a growing number of clinical trials, such as BI 2536, an ATP-competitive PLK1 inhibitor or BI 6727, a dihydropteridinone that specifically inhibits the catalytic activity of PLK1. Its function is as follows. Serine/threonine-protein kinase that performs several important functions throughout M phase of the cell cycle, including the regulation of centrosome maturation and spindle assembly, the removal of cohesins from chromosome arms, the inactivation of anaphase-promoting complex/cyclosome (APC/C) inhibitors, and the regulation of mitotic exit and cytokinesis. Polo-like kinase proteins act by binding and phosphorylating proteins that are already phosphorylated on a specific motif recognized by the POLO box domains. Phosphorylates BORA, BUB1B/BUBR1, CCNB1, CDC25C, CEP55, ECT2, ERCC6L, FBXO5/EMI1, FOXM1, KIF20A/MKLP2, CENPU, NEDD1, NINL, NPM1, NUDC, PKMYT1/MYT1, KIZ, PPP1R12A/MYPT1, PRC1, RACGAP1/CYK4, RHNO1, SGO1, STAG2/SA2, TEX14, TOPORS, p73/TP73, TPT1, WEE1 and HNRNPU. Plays a key role in centrosome functions and the assembly of bipolar spindles by phosphorylating KIZ, NEDD1 and NINL. NEDD1 phosphorylation promotes subsequent targeting of the gamma-tubulin ring complex (gTuRC) to the centrosome, an important step for spindle formation. Phosphorylation of NINL component of the centrosome leads to NINL dissociation from other centrosomal proteins. Involved in mitosis exit and cytokinesis by phosphorylating CEP55, ECT2, KIF20A/MKLP2, CENPU, PRC1 and RACGAP1. Recruited at the central spindle by phosphorylating and docking PRC1 and KIF20A/MKLP2; creates its own docking sites on PRC1 and KIF20A/MKLP2 by mediating phosphorylation of sites subsequently recognized by the POLO box domains. Phosphorylates RACGAP1, thereby creating a docking site for the Rho GTP exchange factor ECT2 that is essential for the cleavage furrow formation. Promotes the central spindle recruitment of ECT2. Plays a central role in G2/M transition of mitotic cell cycle by phosphorylating CCNB1, CDC25C, FOXM1, CENPU, PKMYT1/MYT1, PPP1R12A/MYPT1 and WEE1. Part of a regulatory circuit that promotes the activation of CDK1 by phosphorylating the positive regulator CDC25C and inhibiting the negative regulators WEE1 and PKMYT1/MYT1. Also acts by mediating phosphorylation of cyclin-B1 (CCNB1) on centrosomes in prophase. Phosphorylates FOXM1, a key mitotic transcription regulator, leading to enhance FOXM1 transcriptional activity. Involved in kinetochore functions and sister chromatid cohesion by phosphorylating BUB1B/BUBR1, FBXO5/EMI1 and STAG2/SA2. PLK1 is high on non-attached kinetochores suggesting a role of PLK1 in kinetochore attachment or in spindle assembly checkpoint (SAC) regulation. Required for kinetochore localization of BUB1B. Regulates the dissociation of cohesin from chromosomes by phosphorylating cohesin subunits such as STAG2/SA2. Phosphorylates SGO1: required for spindle pole localization of isoform 3 of SGO1 and plays a role in regulating its centriole cohesion function. Mediates phosphorylation of FBXO5/EMI1, a negative regulator of the APC/C complex during prophase, leading to FBXO5/EMI1 ubiquitination and degradation by the proteasome. Acts as a negative regulator of p53 family members: phosphorylates TOPORS, leading to inhibit the sumoylation of p53/TP53 and simultaneously enhance the ubiquitination and subsequent degradation of p53/TP53. Phosphorylates the transactivation domain of the transcription factor p73/TP73, leading to inhibit p73/TP73-mediated transcriptional activation and pro-apoptotic functions. Phosphorylates BORA, and thereby promotes the degradation of BORA. Contributes to the regulation of AURKA function. Also required for recovery after DNA damage checkpoint and entry into mitosis. Phosphorylates MISP, leading to stabilization of cortical and astral microtubule attachments required for proper spindle positioning. Together with MEIKIN, acts as a regulator of kinetochore function during meiosis I: required both for mono-orientation of kinetochores on sister chromosomes and protection of centromeric cohesin from separase-mediated cleavage. Phosphorylates CEP68 and is required for its degradation. Regulates nuclear envelope breakdown during prophase by phosphorylating DCTN1 resulting in its localization in the nuclear envelope. Phosphorylates the heat shock transcription factor HSF1, promoting HSF1 nuclear translocation upon heat shock. Phosphorylates HSF1 also in the early mitotic period; this phosphorylation regulates HSF1 localization to the spindle pole, the recruitment of the SCF(BTRC) ubiquitin ligase complex induicing HSF1 degradation, and hence mitotic progression. Regulates mitotic progression by phosphorylating RIOK2. Through the phosphorylation of DZIP1 regulates the localization during mitosis of the BBSome, a ciliary protein complex involved in cilium biogenesis. Regulates DNA repair during mitosis by mediating phosphorylation of POLQ and RHNO1, thereby promoting POLQ recruitment to DNA damage sites. Phosphorylates ATXN10 which may play a role in the regulation of cytokinesis and may stimulate the proteasome-mediated degradation of ATXN10. The chain is Serine/threonine-protein kinase PLK1 (Plk1) from Rattus norvegicus (Rat).